The following is a 527-amino-acid chain: Bifunctional purine biosynthesis protein PurH (527 aa).

The 149-residue stretch at 1-149 (MASDFLPVRR…KNFARVAVAA (149 aa)) folds into the MGS-like domain.

The protein belongs to the PurH family.

It carries out the reaction (6R)-10-formyltetrahydrofolate + 5-amino-1-(5-phospho-beta-D-ribosyl)imidazole-4-carboxamide = 5-formamido-1-(5-phospho-D-ribosyl)imidazole-4-carboxamide + (6S)-5,6,7,8-tetrahydrofolate. It catalyses the reaction IMP + H2O = 5-formamido-1-(5-phospho-D-ribosyl)imidazole-4-carboxamide. Its pathway is purine metabolism; IMP biosynthesis via de novo pathway; 5-formamido-1-(5-phospho-D-ribosyl)imidazole-4-carboxamide from 5-amino-1-(5-phospho-D-ribosyl)imidazole-4-carboxamide (10-formyl THF route): step 1/1. It participates in purine metabolism; IMP biosynthesis via de novo pathway; IMP from 5-formamido-1-(5-phospho-D-ribosyl)imidazole-4-carboxamide: step 1/1. This chain is Bifunctional purine biosynthesis protein PurH, found in Xanthomonas axonopodis pv. citri (strain 306).